The chain runs to 227 residues: Cytochrome c oxidase subunit 2 (227 aa).

Residues M1–S14 lie on the Mitochondrial intermembrane side of the membrane. The helical transmembrane segment at P15 to M45 threads the bilayer. Topologically, residues L46 to Q59 are mitochondrial matrix. The helical transmembrane segment at E60–M87 threads the bilayer. Residues D88–T227 are Mitochondrial intermembrane-facing. Cu cation-binding residues include H161, C196, E198, C200, H204, and M207. Residue E198 coordinates Mg(2+).

The protein belongs to the cytochrome c oxidase subunit 2 family. As to quaternary structure, component of the cytochrome c oxidase (complex IV, CIV), a multisubunit enzyme composed of 14 subunits. The complex is composed of a catalytic core of 3 subunits MT-CO1, MT-CO2 and MT-CO3, encoded in the mitochondrial DNA, and 11 supernumerary subunits COX4I, COX5A, COX5B, COX6A, COX6B, COX6C, COX7A, COX7B, COX7C, COX8 and NDUFA4, which are encoded in the nuclear genome. The complex exists as a monomer or a dimer and forms supercomplexes (SCs) in the inner mitochondrial membrane with NADH-ubiquinone oxidoreductase (complex I, CI) and ubiquinol-cytochrome c oxidoreductase (cytochrome b-c1 complex, complex III, CIII), resulting in different assemblies (supercomplex SCI(1)III(2)IV(1) and megacomplex MCI(2)III(2)IV(2)). Found in a complex with TMEM177, COA6, COX18, COX20, SCO1 and SCO2. Interacts with TMEM177 in a COX20-dependent manner. Interacts with COX20. Interacts with COX16. It depends on Cu cation as a cofactor.

It localises to the mitochondrion inner membrane. The enzyme catalyses 4 Fe(II)-[cytochrome c] + O2 + 8 H(+)(in) = 4 Fe(III)-[cytochrome c] + 2 H2O + 4 H(+)(out). Its function is as follows. Component of the cytochrome c oxidase, the last enzyme in the mitochondrial electron transport chain which drives oxidative phosphorylation. The respiratory chain contains 3 multisubunit complexes succinate dehydrogenase (complex II, CII), ubiquinol-cytochrome c oxidoreductase (cytochrome b-c1 complex, complex III, CIII) and cytochrome c oxidase (complex IV, CIV), that cooperate to transfer electrons derived from NADH and succinate to molecular oxygen, creating an electrochemical gradient over the inner membrane that drives transmembrane transport and the ATP synthase. Cytochrome c oxidase is the component of the respiratory chain that catalyzes the reduction of oxygen to water. Electrons originating from reduced cytochrome c in the intermembrane space (IMS) are transferred via the dinuclear copper A center (CU(A)) of subunit 2 and heme A of subunit 1 to the active site in subunit 1, a binuclear center (BNC) formed by heme A3 and copper B (CU(B)). The BNC reduces molecular oxygen to 2 water molecules using 4 electrons from cytochrome c in the IMS and 4 protons from the mitochondrial matrix. In Cratogeomys bursarius (Plains pocket gopher), this protein is Cytochrome c oxidase subunit 2 (MT-CO2).